Reading from the N-terminus, the 338-residue chain is P2Y purinoceptor 14 (338 aa).

Topologically, residues 1–29 are extracellular; the sequence is MINSTSTQPPDESCSQNLLITQQIIPVLY. Asn-3 is a glycosylation site (N-linked (GlcNAc...) asparagine). The helical transmembrane segment at 30-50 threads the bilayer; that stretch reads CMVFIAGILLNGVSGWIFFYV. Topologically, residues 51–55 are cytoplasmic; that stretch reads PSSKS. A helical membrane pass occupies residues 56-76; that stretch reads FIIYLKNIVIADFVMSLTFPF. Topologically, residues 77 to 96 are extracellular; it reads KILGDSGLGPWQLNVFVCRV. Cys-94 and Cys-172 are oxidised to a cystine. Residues 97–117 traverse the membrane as a helical segment; that stretch reads SAVLFYVNMYVSIVFFGLISF. The Cytoplasmic portion of the chain corresponds to 118-139; the sequence is DRYYKIVKPLWTSFIQSVSYSK. The helical transmembrane segment at 140–160 threads the bilayer; that stretch reads LLSVIVWMLMLLLAVPNIILT. Residue Asn-161 is glycosylated (N-linked (GlcNAc...) asparagine). The Extracellular portion of the chain corresponds to 161-188; sequence NQSVREVTQIKCIELKSELGRKWHKASN. A helical transmembrane segment spans residues 189-209; the sequence is YIFVAIFWIVFLLLIVFYTAI. The Cytoplasmic portion of the chain corresponds to 210–234; the sequence is TKKIFKSHLKSSRNSTSVKKKSSRN. A helical transmembrane segment spans residues 235 to 255; the sequence is IFSIVFVFFVCFVPYHIARIP. The Extracellular portion of the chain corresponds to 256-278; sequence YTKSQTEAHYSCQSKEILRYMKE. A helical transmembrane segment spans residues 279-299; that stretch reads FTLLLSAANVCLDPIIYFFLC. Over 300–338 the chain is Cytoplasmic; the sequence is QPFREILCKKLHIPLKAQNDLDISRIKRGNTTLESTDTL.

This sequence belongs to the G-protein coupled receptor 1 family. As to expression, highest expression in the placenta, adipose tissue, stomach and intestine, intermediate levels in the brain, spleen, lung and heart, lowest levels in the kidney.

The protein resides in the cell membrane. Receptor for UDP-glucose and other UDP-sugar coupled to G-proteins. Not activated by ATP, ADP, UTP or ATP. The sequence is that of P2Y purinoceptor 14 (P2RY14) from Homo sapiens (Human).